A 119-amino-acid chain; its full sequence is Phosphoribosyl-AMP cyclohydrolase (119 aa).

Residue Asp71 coordinates Mg(2+). Residue Cys72 participates in Zn(2+) binding. Mg(2+) contacts are provided by Asp73 and Asp75. Positions 90 and 97 each coordinate Zn(2+).

The protein belongs to the PRA-CH family. In terms of assembly, homodimer. Mg(2+) serves as cofactor. Zn(2+) is required as a cofactor.

It localises to the cytoplasm. The enzyme catalyses 1-(5-phospho-beta-D-ribosyl)-5'-AMP + H2O = 1-(5-phospho-beta-D-ribosyl)-5-[(5-phospho-beta-D-ribosylamino)methylideneamino]imidazole-4-carboxamide. It participates in amino-acid biosynthesis; L-histidine biosynthesis; L-histidine from 5-phospho-alpha-D-ribose 1-diphosphate: step 3/9. Catalyzes the hydrolysis of the adenine ring of phosphoribosyl-AMP. The protein is Phosphoribosyl-AMP cyclohydrolase of Brucella abortus (strain 2308).